The primary structure comprises 112 residues: ATP synthase subunit c (112 aa).

A run of 2 helical transmembrane segments spans residues 36–56 (FSVL…AIGM) and 81–101 (MFIA…IALI).

The protein belongs to the ATPase C chain family. F-type ATPases have 2 components, F(1) - the catalytic core - and F(0) - the membrane proton channel. F(1) has five subunits: alpha(3), beta(3), gamma(1), delta(1), epsilon(1). F(0) has three main subunits: a(1), b(2) and c(10-14). The alpha and beta chains form an alternating ring which encloses part of the gamma chain. F(1) is attached to F(0) by a central stalk formed by the gamma and epsilon chains, while a peripheral stalk is formed by the delta and b chains.

It localises to the cell inner membrane. F(1)F(0) ATP synthase produces ATP from ADP in the presence of a proton or sodium gradient. F-type ATPases consist of two structural domains, F(1) containing the extramembraneous catalytic core and F(0) containing the membrane proton channel, linked together by a central stalk and a peripheral stalk. During catalysis, ATP synthesis in the catalytic domain of F(1) is coupled via a rotary mechanism of the central stalk subunits to proton translocation. Functionally, key component of the F(0) channel; it plays a direct role in translocation across the membrane. A homomeric c-ring of between 10-14 subunits forms the central stalk rotor element with the F(1) delta and epsilon subunits. This Campylobacter jejuni subsp. doylei (strain ATCC BAA-1458 / RM4099 / 269.97) protein is ATP synthase subunit c.